A 635-amino-acid chain; its full sequence is tRNA 5-methylaminomethyl-2-thiouridine biosynthesis bifunctional protein MnmC (635 aa).

The segment at 1-227 (MSEPIDWLPD…KRSNLQAEFD (227 aa)) is tRNA (mnm(5)s(2)U34)-methyltransferase. Residues 254-635 (IGGGLSGAAV…ALSTERLPAD (382 aa)) form an FAD-dependent cmnm(5)s(2)U34 oxidoreductase region.

This sequence in the N-terminal section; belongs to the methyltransferase superfamily. tRNA (mnm(5)s(2)U34)-methyltransferase family. In the C-terminal section; belongs to the DAO family. FAD serves as cofactor.

The protein localises to the cytoplasm. The catalysed reaction is 5-aminomethyl-2-thiouridine(34) in tRNA + S-adenosyl-L-methionine = 5-methylaminomethyl-2-thiouridine(34) in tRNA + S-adenosyl-L-homocysteine + H(+). Functionally, catalyzes the last two steps in the biosynthesis of 5-methylaminomethyl-2-thiouridine (mnm(5)s(2)U) at the wobble position (U34) in tRNA. Catalyzes the FAD-dependent demodification of cmnm(5)s(2)U34 to nm(5)s(2)U34, followed by the transfer of a methyl group from S-adenosyl-L-methionine to nm(5)s(2)U34, to form mnm(5)s(2)U34. The polypeptide is tRNA 5-methylaminomethyl-2-thiouridine biosynthesis bifunctional protein MnmC (Paracidovorax citrulli (strain AAC00-1) (Acidovorax citrulli)).